Consider the following 616-residue polypeptide: MALLQISEPGLSAAPHQRRLAAGIDLGTTNSLVATVRSGQAETLADHEGRHLLPSVVHYQQQGHSVGYDARANAALDTANTISSVKRLMGRSLADIQQRYPHLPYQFQASENGLPMIETAAGLLNPVRVSADILKALAARATEALAGDLDGVVITVPAYFDDAQRQGTKDAARLAGLHVLRLLNEPTAAAIAYGLDSGQEGVIAVYDLGGGTFDISILRLSRGVFEVLATGGDSALGGDDFDHLLADYIREQAGIPDRSDNRVQRELLDAAIAAKIALSDADSVTVNVAGWQGEISREQFNELIAPLVKRTLLACRRALKDAGVEADEVLEVVMVGGSTRVPLVRERVGEFFGRPPLTSINPDKVVAIGAAIQADILVGNKPDSEMLLLDVIPLSLGLETMGGLVEKVIPRNTTIPVARAQDFTTFKDGQTAMSIHVMQGERELVQDCRSLARFALRGIPALPAGGAHIRVTFQVDADGLLSVTAMEKSTGVEASIQVKPSYGLTDSEIASMIKDSMSYAEQDVKARMLAEQKVEAARVLESLHGALAADAALLSAAERQVIDDAAAHLSEVAQGDDVDAIEQAIKNVDKQTQDFAARRMDQSVRRALKGHSVDEV.

This sequence belongs to the heat shock protein 70 family.

Chaperone involved in the maturation of iron-sulfur cluster-containing proteins. Has a low intrinsic ATPase activity which is markedly stimulated by HscB. Involved in the maturation of IscU. This chain is Chaperone protein HscA, found in Escherichia fergusonii (strain ATCC 35469 / DSM 13698 / CCUG 18766 / IAM 14443 / JCM 21226 / LMG 7866 / NBRC 102419 / NCTC 12128 / CDC 0568-73).